The primary structure comprises 542 residues: Propane 2-monooxygenase, hydroxylase component large subunit (542 aa).

The Fe cation site is built by E97, E127, H130, E192, E226, and H229.

The protein belongs to the TmoA/XamoA family. The propane 2-monooxygenase multicomponent enzyme system is composed of an electron transfer component and a monooxygenase component interacting with the effector protein MimD. The electron transfer component is composed of a reductase (MimB), and the monooxygenase component is formed by a large subunit (MimA) and a small subunit (MimC). Requires the presence of the chaperonin-like protein MimG to ensure a productive folding, resulting of a soluble MimA, which leads to the active form of MimABCD. Fe(2+) is required as a cofactor.

It carries out the reaction propane + NADH + O2 + H(+) = propan-2-ol + NAD(+) + H2O. It catalyses the reaction acetone + NADH + O2 + H(+) = hydroxyacetone + NAD(+) + H2O. The catalysed reaction is butan-2-one + NADH + O2 + H(+) = 1-hydroxy-2-butanone + NAD(+) + H2O. The enzyme catalyses phenol + NADH + O2 + H(+) = hydroquinone + NAD(+) + H2O. Functionally, component of the propane 2-monooxygenase multicomponent enzyme system which is involved in the degradation of propane via the O2-dependent hydroxylation of propane. Also involved in the degradation of acetone via the O2-dependent hydroxylation of acetone. Also able to catalyze the oxidation of phenol, methylethylketone (2-butanone), 1-propanol and 2-propanol. This is Propane 2-monooxygenase, hydroxylase component large subunit from Mycolicibacterium smegmatis (strain ATCC 700084 / mc(2)155) (Mycobacterium smegmatis).